A 105-amino-acid chain; its full sequence is Replication restart protein PriB (105 aa).

One can recognise an SSB domain in the interval 1 to 102 (MTANRLTLSG…LHAEQIELID (102 aa)).

This sequence belongs to the PriB family. Homodimer. Interacts with PriA and DnaT. Component of the replication restart primosome. Primosome assembly occurs via a 'hand-off' mechanism. PriA binds to replication forks, subsequently PriB then DnaT bind; DnaT then displaces ssDNA to generate the helicase loading substrate.

Its function is as follows. Involved in the restart of stalled replication forks, which reloads the replicative helicase on sites other than the origin of replication; the PriA-PriB pathway is the major replication restart pathway. During primosome assembly it facilitates complex formation between PriA and DnaT on DNA; stabilizes PriA on DNA. Stimulates the DNA unwinding activity of PriA helicase. This chain is Replication restart protein PriB, found in Serratia proteamaculans (strain 568).